The primary structure comprises 411 residues: Exodeoxyribonuclease 7 large subunit (411 aa).

The protein belongs to the XseA family. As to quaternary structure, heterooligomer composed of large and small subunits.

The protein resides in the cytoplasm. The catalysed reaction is Exonucleolytic cleavage in either 5'- to 3'- or 3'- to 5'-direction to yield nucleoside 5'-phosphates.. Bidirectionally degrades single-stranded DNA into large acid-insoluble oligonucleotides, which are then degraded further into small acid-soluble oligonucleotides. This is Exodeoxyribonuclease 7 large subunit from Mycobacterium sp. (strain KMS).